The chain runs to 382 residues: Succinyl-diaminopimelate desuccinylase (382 aa).

Position 68 (H68) interacts with Zn(2+). Residue D70 is part of the active site. Position 101 (D101) interacts with Zn(2+). E135 (proton acceptor) is an active-site residue. E136, E164, and H350 together coordinate Zn(2+).

The protein belongs to the peptidase M20A family. DapE subfamily. In terms of assembly, homodimer. The cofactor is Zn(2+). Requires Co(2+) as cofactor.

It carries out the reaction N-succinyl-(2S,6S)-2,6-diaminopimelate + H2O = (2S,6S)-2,6-diaminopimelate + succinate. It participates in amino-acid biosynthesis; L-lysine biosynthesis via DAP pathway; LL-2,6-diaminopimelate from (S)-tetrahydrodipicolinate (succinylase route): step 3/3. Functionally, catalyzes the hydrolysis of N-succinyl-L,L-diaminopimelic acid (SDAP), forming succinate and LL-2,6-diaminopimelate (DAP), an intermediate involved in the bacterial biosynthesis of lysine and meso-diaminopimelic acid, an essential component of bacterial cell walls. The protein is Succinyl-diaminopimelate desuccinylase of Acidithiobacillus ferrooxidans (strain ATCC 23270 / DSM 14882 / CIP 104768 / NCIMB 8455) (Ferrobacillus ferrooxidans (strain ATCC 23270)).